The following is a 608-amino-acid chain: MKNLLSLCFLMLAAFTLNPAAAQEKQSIFDVSNSSLFSNDDEFLKVDQAFAFNFYQKNNLLEVSFDIAPEYYLYRHQFKFKGKNTQFTSVLLPDGIDHEDEFFGVQKIFTENLAFTVNLENVSNDASIKITYQGCAEKGLCYPPTSKVIKLSKFILGESTSAPSSDAAQQTNEGEVKKSEQHQLSDMLKQDSLLLTLIAFFVGGLLLSFTPCVFPMYPILTGIIVGQGEGLTTKKAFTLSFFYVQGMAITYTLLGVVVAMAGAKFQAVFQHPIVLIGLSILFIFLALSMFGVFNLALPASWQNKLNNVSNKQKGGSITGVLMMGVISGLVASPCTTAPLTGALLYISQTGDVVLGASALYALSLGMGLPLLILGSSGGKLLPKAGAWMNIIKNIFGLLLLAVPVFLLERFIPEVASQALWALLILVSASYFYVANQNHAAAQNVQQGKGFWYGLRSLVIFLMLFFGANLAYQLIYPSSNNVTNNAQHASFKQVTSLAQLEDEVKKANMQGKTVMVDLYADWCIACKEFEKYTFVDADVQKALSNSVWLQIDMTEFDSTDNAELVQHYTILGLPSILFFDLQGNELTKQRTTGFMKAAEFSAHVKSIFK.

An N-terminal signal peptide occupies residues 1-22 (MKNLLSLCFLMLAAFTLNPAAA). Cysteine 135 and cysteine 141 are oxidised to a cystine. The segment covering 161–173 (SAPSSDAAQQTNE) has biased composition (polar residues). The disordered stretch occupies residues 161-180 (SAPSSDAAQQTNEGEVKKSE). 8 consecutive transmembrane segments (helical) span residues 194 to 214 (LLTL…PCVF), 241 to 261 (FFYV…VAMA), 273 to 293 (IVLI…FGVF), 314 to 334 (GGSI…ASPC), 352 to 372 (VVLG…PLLI), 387 to 407 (WMNI…VFLL), 414 to 434 (VASQ…FYVA), and 456 to 476 (SLVI…LIYP). Cysteine 212 and cysteine 334 are disulfide-bonded. The Thioredoxin domain maps to 469–608 (LAYQLIYPSS…FSAHVKSIFK (140 aa)). Residues cysteine 522 and cysteine 525 are joined by a disulfide bond.

This sequence belongs to the thioredoxin family. DsbD subfamily.

Its subcellular location is the cell inner membrane. The enzyme catalyses [protein]-dithiol + NAD(+) = [protein]-disulfide + NADH + H(+). It catalyses the reaction [protein]-dithiol + NADP(+) = [protein]-disulfide + NADPH + H(+). In terms of biological role, required to facilitate the formation of correct disulfide bonds in some periplasmic proteins and for the assembly of the periplasmic c-type cytochromes. Acts by transferring electrons from cytoplasmic thioredoxin to the periplasm. This transfer involves a cascade of disulfide bond formation and reduction steps. The polypeptide is Thiol:disulfide interchange protein DsbD (Colwellia psychrerythraea (strain 34H / ATCC BAA-681) (Vibrio psychroerythus)).